Reading from the N-terminus, the 135-residue chain is C-type lectin BPL (135 aa).

4 cysteine pairs are disulfide-bonded: C3–C14, C31–C131, C38–C133, and C106–C123. Residues 10–132 (MNGLCYKIFN…CESKNAFLCQ (123 aa)) enclose the C-type lectin domain. Residues Q96, D98, E104, and D120 each coordinate Ca(2+). The Galactose-binding motif lies at 96–98 (QPD).

It belongs to the true venom lectin family. As to quaternary structure, homodimer; disulfide-linked. Expressed by the venom gland.

It is found in the secreted. In terms of biological role, galactose-binding protein which recognizes specific carbohydrate structures and agglutinates a variety of animal cells by binding to cell-surface glycoproteins and glycolipids. Calcium-dependent lectin. Shows high hemagglutinating activity in the presence of human erythrocytes, which are agglutinated with a minimum hemagglutination concentration (MHC) of 2.5-0.35 ug/ml. Causes indirect nephrotoxicity. Causes reductions in perfusion pressures, renal vascular resistance, urinary flow, glomerular filtration rate, sodium, potassium and chloride tubular transport. Its effects may be caused by the release of inflammatory mediators. The chain is C-type lectin BPL from Bothrops pirajai (Piraja's lancehead).